The following is a 262-amino-acid chain: Beta-phosphoglucomutase (262 aa).

The active-site Nucleophile is the aspartate 29. Aspartate 29 and aspartate 31 together coordinate Mg(2+). Residue aspartate 29 is modified to 4-aspartylphosphate. Aspartate 31 (proton donor/acceptor) is an active-site residue. 5 residues coordinate beta-D-glucose 6-phosphate: aspartate 31, glycine 79, arginine 82, serine 157, and asparagine 159. Aspartate 215 lines the Mg(2+) pocket.

It belongs to the HAD-like hydrolase superfamily. CbbY/CbbZ/Gph/YieH family. In terms of assembly, monomer. Requires Mg(2+) as cofactor. In terms of processing, autophosphorylated.

The enzyme catalyses beta-D-glucose 1-phosphate = beta-D-glucose 6-phosphate. In terms of biological role, catalyzes the interconversion of D-glucose 1-phosphate (G1P) and D-glucose 6-phosphate (G6P), forming beta-D-glucose 1,6-(bis)phosphate (beta-G16P) as an intermediate. This is Beta-phosphoglucomutase from Mycobacterium bovis (strain ATCC BAA-935 / AF2122/97).